The sequence spans 444 residues: Glutamate--tRNA ligase (444 aa).

The 'HIGH' region motif lies at 12–22; that stretch reads PSPTGFLHVGG. The 'KMSKS' region motif lies at 213–217; sequence KMSKR. Lysine 216 serves as a coordination point for ATP.

Belongs to the class-I aminoacyl-tRNA synthetase family. Glutamate--tRNA ligase type 1 subfamily. As to quaternary structure, monomer.

It is found in the cytoplasm. It carries out the reaction tRNA(Glu) + L-glutamate + ATP = L-glutamyl-tRNA(Glu) + AMP + diphosphate. Catalyzes the attachment of glutamate to tRNA(Glu) in a two-step reaction: glutamate is first activated by ATP to form Glu-AMP and then transferred to the acceptor end of tRNA(Glu). The chain is Glutamate--tRNA ligase from Methylacidiphilum infernorum (isolate V4) (Methylokorus infernorum (strain V4)).